A 490-amino-acid polypeptide reads, in one-letter code: ATP synthase subunit beta (490 aa).

175-182 (GGAGVGKT) is a binding site for ATP.

It belongs to the ATPase alpha/beta chains family. F-type ATPases have 2 components, CF(1) - the catalytic core - and CF(0) - the membrane proton channel. CF(1) has five subunits: alpha(3), beta(3), gamma(1), delta(1), epsilon(1). CF(0) has three main subunits: a(1), b(2) and c(9-12). The alpha and beta chains form an alternating ring which encloses part of the gamma chain. CF(1) is attached to CF(0) by a central stalk formed by the gamma and epsilon chains, while a peripheral stalk is formed by the delta and b chains.

It is found in the cell membrane. It catalyses the reaction ATP + H2O + 4 H(+)(in) = ADP + phosphate + 5 H(+)(out). Functionally, produces ATP from ADP in the presence of a proton gradient across the membrane. The catalytic sites are hosted primarily by the beta subunits. The sequence is that of ATP synthase subunit beta from Acidothermus cellulolyticus (strain ATCC 43068 / DSM 8971 / 11B).